The primary structure comprises 269 residues: MPRSFLVKKHFNASKKPNYSELDTHTVIISPYLYESYPIPVIPKPEILTSGAYSPITVWTSSAAPLHSPLPSGLSPLTGYSSSLGRVSPPPSSDTSSKDHSGSESPISDEEERLQPKLSDPHAIEAEKFQCNLCNKTYSTFSGLAKHKQLHCDAQSRKSFSCKYCDKEYVSLGALKMHIRTHTLPCVCKICGKAFSRPWLLQGHIRTHTGEKPFSCPHCNRAFADRSNLRAHLQTHSDVKKYQCKNCSKTFSRMSLLHKHEESGCCVAH.

Residues Met1–Ser20 form an SNAG domain region. The segment at Ser81 to Lys117 is disordered. 4 consecutive C2H2-type zinc fingers follow at residues Phe129–His151, Phe160–His182, Cys186–His208, and Phe214–His236. The C2H2-type 5; atypical zinc-finger motif lies at Tyr242 to Cys265.

Belongs to the snail C2H2-type zinc-finger protein family. As to quaternary structure, interacts (via SNAG domain) with LIMD1 (via LIM domains), WTIP (via LIM domains) and AJUBA (via LIM domains). Interacts (via zinc fingers) with KPNA2, KPNB1, and TNPO1. May interact (via zinc fingers) with IPO7. In terms of processing, phosphorylated by GSK3B. Once phosphorylated, it becomes a target for ubiquitination. Ubiquitinated by the SCF(FBXO11) complex; ubiquitination requires previous GSK3B-mediated SNAI2 phosphorylation.

The protein resides in the nucleus. Its subcellular location is the cytoplasm. Its function is as follows. Transcriptional repressor that modulates both activator-dependent and basal transcription. Involved in the generation and migration of neural crest cells. Plays a role in mediating RAF1-induced transcriptional repression of the TJ protein, occludin (OCLN) and subsequent oncogenic transformation of epithelial cells. Represses BRCA2 expression by binding to its E2-box-containing silencer and recruiting CTBP1 and HDAC1 in breast cells. In epidermal keratinocytes, binds to the E-box in ITGA3 promoter and represses its transcription. Involved in the regulation of ITGB1 and ITGB4 expression and cell adhesion and proliferation in epidermal keratinocytes. Binds to E-box2 domain of BSG and activates its expression during TGFB1-induced epithelial-mesenchymal transition (EMT) in hepatocytes. Represses E-Cadherin/CDH1 transcription via E-box elements. Involved in osteoblast maturation. Binds to RUNX2 and SOC9 promoters and may act as a positive and negative transcription regulator, respectively, in osteoblasts. Binds to CXCL12 promoter via E-box regions in mesenchymal stem cells and osteoblasts. Plays an essential role in TWIST1-induced EMT and its ability to promote invasion and metastasis. The protein is Zinc finger protein SNAI2 (Snai2) of Mus musculus (Mouse).